We begin with the raw amino-acid sequence, 286 residues long: 2,3,4,5-tetrahydropyridine-2,6-dicarboxylate N-succinyltransferase (286 aa).

Arg-111 and Asp-148 together coordinate substrate.

This sequence belongs to the transferase hexapeptide repeat family. As to quaternary structure, homotrimer.

It localises to the cytoplasm. It catalyses the reaction (S)-2,3,4,5-tetrahydrodipicolinate + succinyl-CoA + H2O = (S)-2-succinylamino-6-oxoheptanedioate + CoA. The protein operates within amino-acid biosynthesis; L-lysine biosynthesis via DAP pathway; LL-2,6-diaminopimelate from (S)-tetrahydrodipicolinate (succinylase route): step 1/3. The protein is 2,3,4,5-tetrahydropyridine-2,6-dicarboxylate N-succinyltransferase of Rhizobium etli (strain ATCC 51251 / DSM 11541 / JCM 21823 / NBRC 15573 / CFN 42).